Here is a 190-residue protein sequence, read N- to C-terminus: Holliday junction branch migration complex subunit RuvA (190 aa).

The tract at residues 1-64 (MIGRITGTLI…EDAHILYGFA (64 aa)) is domain I. The segment at 65–137 (TAAERGAFRE…MRGKLGADIG (73 aa)) is domain II. The interval 137 to 141 (GATAH) is flexible linker. Residues 142 to 190 (AVPDSQTDILNALLALGYSDKESQAALKKLPEGTGVSEGIRLALKALVR) form a domain III region.

The protein belongs to the RuvA family. Homotetramer. Forms an RuvA(8)-RuvB(12)-Holliday junction (HJ) complex. HJ DNA is sandwiched between 2 RuvA tetramers; dsDNA enters through RuvA and exits via RuvB. An RuvB hexamer assembles on each DNA strand where it exits the tetramer. Each RuvB hexamer is contacted by two RuvA subunits (via domain III) on 2 adjacent RuvB subunits; this complex drives branch migration. In the full resolvosome a probable DNA-RuvA(4)-RuvB(12)-RuvC(2) complex forms which resolves the HJ.

The protein resides in the cytoplasm. In terms of biological role, the RuvA-RuvB-RuvC complex processes Holliday junction (HJ) DNA during genetic recombination and DNA repair, while the RuvA-RuvB complex plays an important role in the rescue of blocked DNA replication forks via replication fork reversal (RFR). RuvA specifically binds to HJ cruciform DNA, conferring on it an open structure. The RuvB hexamer acts as an ATP-dependent pump, pulling dsDNA into and through the RuvAB complex. HJ branch migration allows RuvC to scan DNA until it finds its consensus sequence, where it cleaves and resolves the cruciform DNA. In Bordetella petrii (strain ATCC BAA-461 / DSM 12804 / CCUG 43448), this protein is Holliday junction branch migration complex subunit RuvA.